A 179-amino-acid chain; its full sequence is Inner membrane-spanning protein YciB (179 aa).

5 helical membrane-spanning segments follow: residues Ile-22–Val-42, Met-50–Asn-70, Trp-76–Met-96, Leu-121–Leu-141, and Phe-149–Ile-169.

Belongs to the YciB family.

It localises to the cell inner membrane. Plays a role in cell envelope biogenesis, maintenance of cell envelope integrity and membrane homeostasis. The protein is Inner membrane-spanning protein YciB of Shigella boydii serotype 18 (strain CDC 3083-94 / BS512).